The sequence spans 441 residues: Mannose-6-phosphate isomerase 2 (441 aa).

The Zn(2+) site is built by Gln-131, His-133, Glu-158, and His-296. Arg-315 is an active-site residue.

It belongs to the mannose-6-phosphate isomerase type 1 family. Zn(2+) serves as cofactor. In terms of tissue distribution, not expressed in any organs under light (at protein level).

The enzyme catalyses D-mannose 6-phosphate = D-fructose 6-phosphate. The protein operates within nucleotide-sugar biosynthesis; GDP-alpha-D-mannose biosynthesis; alpha-D-mannose 1-phosphate from D-fructose 6-phosphate: step 1/2. Its activity is regulated as follows. Inhibited by EDTA, Zn(2+), Cd(2+), DTT, p-chloromercuribenzoate and L-ascorbic acid (AsA). Involved in the synthesis of the GDP-mannose and dolichol-phosphate-mannose required for a number of critical mannosyl transfer reactions. The polypeptide is Mannose-6-phosphate isomerase 2 (PMI2) (Arabidopsis thaliana (Mouse-ear cress)).